Consider the following 185-residue polypeptide: Potassium-transporting ATPase KdpC subunit (185 aa).

A helical membrane pass occupies residues 14-34 (ALSLLTGVAYPLALTGIAAVI).

Belongs to the KdpC family. In terms of assembly, the system is composed of three essential subunits: KdpA, KdpB and KdpC.

The protein localises to the cell inner membrane. Its function is as follows. Part of the high-affinity ATP-driven potassium transport (or Kdp) system, which catalyzes the hydrolysis of ATP coupled with the electrogenic transport of potassium into the cytoplasm. This subunit acts as a catalytic chaperone that increases the ATP-binding affinity of the ATP-hydrolyzing subunit KdpB by the formation of a transient KdpB/KdpC/ATP ternary complex. The polypeptide is Potassium-transporting ATPase KdpC subunit (Cereibacter sphaeroides (strain ATCC 17023 / DSM 158 / JCM 6121 / CCUG 31486 / LMG 2827 / NBRC 12203 / NCIMB 8253 / ATH 2.4.1.) (Rhodobacter sphaeroides)).